Here is a 95-residue protein sequence, read N- to C-terminus: Large ribosomal subunit protein uL23 (95 aa).

This sequence belongs to the universal ribosomal protein uL23 family. Part of the 50S ribosomal subunit. Contacts protein L29, and trigger factor when it is bound to the ribosome.

In terms of biological role, one of the early assembly proteins it binds 23S rRNA. One of the proteins that surrounds the polypeptide exit tunnel on the outside of the ribosome. Forms the main docking site for trigger factor binding to the ribosome. In Fusobacterium nucleatum subsp. nucleatum (strain ATCC 25586 / DSM 15643 / BCRC 10681 / CIP 101130 / JCM 8532 / KCTC 2640 / LMG 13131 / VPI 4355), this protein is Large ribosomal subunit protein uL23.